Consider the following 209-residue polypeptide: Cytidylate kinase (209 aa).

Gly-7 to Ser-15 lines the ATP pocket.

This sequence belongs to the cytidylate kinase family. Type 1 subfamily.

It is found in the cytoplasm. It catalyses the reaction CMP + ATP = CDP + ADP. It carries out the reaction dCMP + ATP = dCDP + ADP. The polypeptide is Cytidylate kinase (Deinococcus geothermalis (strain DSM 11300 / CIP 105573 / AG-3a)).